The primary structure comprises 164 residues: Transforming protein STP (164 aa).

The interval 1–41 is disordered; that stretch reads MARGLGEGDPQENDESNGDPPHNTDERSDGDDGPTPYLPVT. Residues 122–135 fold into a zinc finger; the sequence is HSEHEQEGDKCTDC. Residues 136–161 form a helical membrane-spanning segment; that stretch reads SVTILLLLVIIVLLLIIIGLMLVIMF.

The protein resides in the membrane. In terms of biological role, stp is required for transformation, but it is not required for replication of the virus. The T-lymphocyte is the target cell for transformation by herpesvirus saimiri. In Saimiriine herpesvirus 2 (strain 11) (SaHV-2), this protein is Transforming protein STP (1).